Here is a 69-residue protein sequence, read N- to C-terminus: Sperm protamine P1 (69 aa).

Composition is skewed to basic residues over residues M1 to G30 and K37 to N69. The interval M1 to N69 is disordered.

It belongs to the protamine P1 family. In terms of tissue distribution, testis.

It localises to the nucleus. Its subcellular location is the chromosome. Its function is as follows. Protamines substitute for histones in the chromatin of sperm during the haploid phase of spermatogenesis. They compact sperm DNA into a highly condensed, stable and inactive complex. The polypeptide is Sperm protamine P1 (PRM1) (Tachyglossus aculeatus aculeatus (Southeast Australian short-beaked echidna)).